We begin with the raw amino-acid sequence, 163 residues long: 2-C-methyl-D-erythritol 2,4-cyclodiphosphate synthase (163 aa).

A divalent metal cation-binding residues include aspartate 9 and histidine 11. 4-CDP-2-C-methyl-D-erythritol 2-phosphate-binding positions include aspartate 9–histidine 11 and histidine 36–serine 37. Histidine 44 contacts a divalent metal cation. 4-CDP-2-C-methyl-D-erythritol 2-phosphate contacts are provided by residues aspartate 58–glycine 60, phenylalanine 63–aspartate 67, threonine 134–glutamate 137, phenylalanine 141, and arginine 144.

It belongs to the IspF family. In terms of assembly, homotrimer. It depends on a divalent metal cation as a cofactor.

It carries out the reaction 4-CDP-2-C-methyl-D-erythritol 2-phosphate = 2-C-methyl-D-erythritol 2,4-cyclic diphosphate + CMP. It functions in the pathway isoprenoid biosynthesis; isopentenyl diphosphate biosynthesis via DXP pathway; isopentenyl diphosphate from 1-deoxy-D-xylulose 5-phosphate: step 4/6. Involved in the biosynthesis of isopentenyl diphosphate (IPP) and dimethylallyl diphosphate (DMAPP), two major building blocks of isoprenoid compounds. Catalyzes the conversion of 4-diphosphocytidyl-2-C-methyl-D-erythritol 2-phosphate (CDP-ME2P) to 2-C-methyl-D-erythritol 2,4-cyclodiphosphate (ME-CPP) with a corresponding release of cytidine 5-monophosphate (CMP). The protein is 2-C-methyl-D-erythritol 2,4-cyclodiphosphate synthase of Halorhodospira halophila (strain DSM 244 / SL1) (Ectothiorhodospira halophila (strain DSM 244 / SL1)).